The sequence spans 142 residues: Nucleoside diphosphate kinase (142 aa).

6 residues coordinate ATP: Lys-11, Phe-59, Arg-87, Thr-93, Arg-104, and Asn-114. The active-site Pros-phosphohistidine intermediate is the His-117.

This sequence belongs to the NDK family. Homotetramer. Mg(2+) is required as a cofactor.

It is found in the cytoplasm. It catalyses the reaction a 2'-deoxyribonucleoside 5'-diphosphate + ATP = a 2'-deoxyribonucleoside 5'-triphosphate + ADP. The catalysed reaction is a ribonucleoside 5'-diphosphate + ATP = a ribonucleoside 5'-triphosphate + ADP. Its function is as follows. Major role in the synthesis of nucleoside triphosphates other than ATP. The ATP gamma phosphate is transferred to the NDP beta phosphate via a ping-pong mechanism, using a phosphorylated active-site intermediate. The sequence is that of Nucleoside diphosphate kinase from Pectobacterium carotovorum subsp. carotovorum (strain PC1).